The following is a 152-amino-acid chain: Transcriptional regulator MraZ (152 aa).

SpoVT-AbrB domains are found at residues 5 to 52 (ATLV…PLPE) and 81 to 124 (ASEC…DETT).

Belongs to the MraZ family. As to quaternary structure, forms oligomers.

It localises to the cytoplasm. The protein resides in the nucleoid. Its function is as follows. Negatively regulates its own expression and that of the subsequent genes in the proximal part of the division and cell wall (dcw) gene cluster. Acts by binding directly to DNA. May also regulate the expression of genes outside the dcw cluster. This Shigella dysenteriae serotype 1 (strain Sd197) protein is Transcriptional regulator MraZ.